The primary structure comprises 224 residues: Paired immunoglobulin-like type 2 receptor beta (224 aa).

The first 28 residues, 1-28, serve as a signal peptide directing secretion; the sequence is MALLISLPGGTPAMAQVLLLLSSGCLHA. Residues 29–195 are Extracellular-facing; that stretch reads GNSERYNRKN…NPSLMNLGAM (167 aa). N-linked (GlcNAc...) asparagine glycans are attached at residues Asn90, Asn107, and Asn154. The chain crosses the membrane as a helical span at residues 196–216; the sequence is VTMLLAKVLVIVLVYGWMIFL. The Cytoplasmic portion of the chain corresponds to 217-224; sequence RWKQRPAH.

Interacts with CD99. Probably associates with DAP12. As to expression, widely expressed with highest levels in spleen, liver and lung. Predominantly expressed by natural killer cells, macrophages, and granulocytes and dendritic cells (BM-DC).

The protein resides in the membrane. Its function is as follows. Paired receptors consist of highly related activating and inhibitory receptors and are widely involved in the regulation of the immune system. PILRB is thought to act as a cellular signaling activating receptor that associates with ITAM-bearing adapter molecules on the cell surface. Seems to associate with DAP12 and is a receptor for CD99. May be involved in target cell recognition by natural killer cells and in activation of dendritic cells. This chain is Paired immunoglobulin-like type 2 receptor beta (Pilrb), found in Mus musculus (Mouse).